A 216-amino-acid polypeptide reads, in one-letter code: ADP-ribosylation factor D (216 aa).

Residues 188–204 (SKFSFSNKSKQQKSNSQ) show a composition bias toward low complexity. Residues 188–216 (SKFSFSNKSKQQKSNSQPNTPRKNIQMMT) form a disordered region. Positions 205–216 (PNTPRKNIQMMT) are enriched in polar residues.

This sequence belongs to the small GTPase superfamily. Arf family.

Its subcellular location is the golgi apparatus. In terms of biological role, GTP-binding protein involved in protein trafficking; may modulate vesicle budding and uncoating within the Golgi apparatus. This is ADP-ribosylation factor D (arrD) from Dictyostelium discoideum (Social amoeba).